We begin with the raw amino-acid sequence, 486 residues long: Cysteine--tRNA ligase (486 aa).

Residue Cys-27 coordinates Zn(2+). Positions 29-39 match the 'HIGH' region motif; sequence PTTYNFIHLGN. Zn(2+)-binding residues include Cys-207, His-232, and Glu-236. A 'KMSKS' region motif is present at residues 264-268; that stretch reads KMSKS. Lys-267 contacts ATP.

Belongs to the class-I aminoacyl-tRNA synthetase family. Monomer. Requires Zn(2+) as cofactor.

The protein localises to the cytoplasm. It catalyses the reaction tRNA(Cys) + L-cysteine + ATP = L-cysteinyl-tRNA(Cys) + AMP + diphosphate. The protein is Cysteine--tRNA ligase of Desulforamulus reducens (strain ATCC BAA-1160 / DSM 100696 / MI-1) (Desulfotomaculum reducens).